The following is a 604-amino-acid chain: Inactive all-trans-retinol 13,14-reductase (604 aa).

The first 17 residues, 1–17 (MWWILLFLEWFVDWARG), serve as a signal peptide directing secretion.

It belongs to the carotenoid/retinoid oxidoreductase family. CrtISO subfamily.

This chain is Inactive all-trans-retinol 13,14-reductase (retsatl), found in Danio rerio (Zebrafish).